Consider the following 344-residue polypeptide: N-acetyl-gamma-glutamyl-phosphate reductase 1 (344 aa).

Cysteine 150 is a catalytic residue.

This sequence belongs to the NAGSA dehydrogenase family. Type 1 subfamily.

The protein resides in the cytoplasm. The enzyme catalyses N-acetyl-L-glutamate 5-semialdehyde + phosphate + NADP(+) = N-acetyl-L-glutamyl 5-phosphate + NADPH + H(+). The protein operates within amino-acid biosynthesis; L-arginine biosynthesis; N(2)-acetyl-L-ornithine from L-glutamate: step 3/4. Its function is as follows. Catalyzes the NADPH-dependent reduction of N-acetyl-5-glutamyl phosphate to yield N-acetyl-L-glutamate 5-semialdehyde. The chain is N-acetyl-gamma-glutamyl-phosphate reductase 1 from Pseudomonas putida (strain ATCC 47054 / DSM 6125 / CFBP 8728 / NCIMB 11950 / KT2440).